A 427-amino-acid polypeptide reads, in one-letter code: Adenylosuccinate synthetase (427 aa).

GTP-binding positions include 12-18 (GDEGKGK) and 40-42 (GHT). D13 functions as the Proton acceptor in the catalytic mechanism. Residues D13 and G40 each coordinate Mg(2+). IMP-binding positions include 13-16 (DEGK), 38-41 (NAGH), T128, R142, Q223, T238, and R302. The active-site Proton donor is H41. 298-304 (TVTGRAR) contacts substrate. Residues R304, 330–332 (RLD), and 412–414 (SVG) contribute to the GTP site.

This sequence belongs to the adenylosuccinate synthetase family. Homodimer. It depends on Mg(2+) as a cofactor.

The protein resides in the cytoplasm. It catalyses the reaction IMP + L-aspartate + GTP = N(6)-(1,2-dicarboxyethyl)-AMP + GDP + phosphate + 2 H(+). Its pathway is purine metabolism; AMP biosynthesis via de novo pathway; AMP from IMP: step 1/2. Functionally, plays an important role in the de novo pathway of purine nucleotide biosynthesis. Catalyzes the first committed step in the biosynthesis of AMP from IMP. The polypeptide is Adenylosuccinate synthetase (Brachyspira hyodysenteriae (strain ATCC 49526 / WA1)).